A 256-amino-acid chain; its full sequence is Transmembrane protein 74B (256 aa).

The disordered stretch occupies residues 1–111 (MPPAQGYEFA…LSLHSEEGPA (111 aa)). Low complexity predominate over residues 80 to 96 (RLGSSPSPPGGVSSLPR). Positions 97–108 (SQRDDLSLHSEE) are enriched in basic and acidic residues. Transmembrane regions (helical) follow at residues 123–143 (FVSA…AYAI) and 177–197 (IIAG…LLMV).

Belongs to the TMEM74 family.

Its subcellular location is the membrane. The sequence is that of Transmembrane protein 74B (TMEM74B) from Homo sapiens (Human).